Here is a 388-residue protein sequence, read N- to C-terminus: Probable proton-coupled zinc antiporter SLC30A3 (388 aa).

Positions 1–13 (MEPSPTTGGSETT) are enriched in polar residues. 2 disordered regions span residues 1 to 30 (MEPS…GLRL) and 35 to 54 (TEAP…SFHH). Residues 1-75 (MEPSPTTGGS…TPERMQAQRQ (75 aa)) are Cytoplasmic-facing. Residues 76 to 96 (LCTACAVCCVFMAGEVVGGYL) traverse the membrane as a helical segment. Residues 97 to 105 (AHSLAIMTD) are Lumenal-facing. A helical membrane pass occupies residues 106-126 (AAHLLADVGSMMGSLFSLWLS). Zn(2+) contacts are provided by H108 and D112. The Cytoplasmic portion of the chain corresponds to 127-145 (TRPATRTMTFGWHRSETLG). A helical membrane pass occupies residues 146–166 (ALASVVSLWMVTGILLYLAFI). Residues 167–177 (RLLHSDYHIEG) are Lumenal-facing. A helical transmembrane segment spans residues 178-198 (GAMLLTASIAVCANLLMAFVL). Residues 199-235 (HQAGPPHSHGSRGAEYAPLEEGSGEPLPLGNTSVRAA) lie on the Cytoplasmic side of the membrane. The chain crosses the membrane as a helical span at residues 236–256 (FVHVLGDLLQSLGVLIASILI). Positions 238 and 242 each coordinate Zn(2+). Residues 257–264 (YFKPQYKA) are Lumenal-facing. A helical transmembrane segment spans residues 265-285 (ADPISTFLFSICALGSTAPTL). The Cytoplasmic segment spans residues 286-388 (RDVLRVLMEG…CLRCQEPPQA (103 aa)).

The protein belongs to the cation diffusion facilitator (CDF) transporter (TC 2.A.4) family. SLC30A subfamily. In terms of assembly, homodimer. Homodimerization could regulate efficiency of zinc transport. Interacts with TMEM163.

The protein localises to the cytoplasmic vesicle. It is found in the secretory vesicle. It localises to the synaptic vesicle membrane. Its subcellular location is the synapse. The protein resides in the synaptosome. The protein localises to the late endosome membrane. It is found in the lysosome membrane. It carries out the reaction Zn(2+)(in) + 2 H(+)(out) = Zn(2+)(out) + 2 H(+)(in). Its function is as follows. Probable proton-coupled zinc ion antiporter mediating the import of zinc from cytoplasm into synaptic vesicles and participating to cellular zinc ion homeostasis in the brain. This is Probable proton-coupled zinc antiporter SLC30A3 from Bos taurus (Bovine).